The chain runs to 444 residues: Chromosome partition protein MukF (444 aa).

A leucine-zipper region spans residues 212-240; that stretch reads LDETSGNLRELQDTLNAAGDKLQAQLLRI.

The protein belongs to the MukF family. As to quaternary structure, interacts, and probably forms a ternary complex, with MukE and MukB via its C-terminal region. The complex formation is stimulated by calcium or magnesium. It is required for an interaction between MukE and MukB.

The protein localises to the cytoplasm. Its subcellular location is the nucleoid. Functionally, involved in chromosome condensation, segregation and cell cycle progression. May participate in facilitating chromosome segregation by condensation DNA from both sides of a centrally located replisome during cell division. Not required for mini-F plasmid partitioning. Probably acts via its interaction with MukB and MukE. Overexpression results in anucleate cells. It has a calcium binding activity. This chain is Chromosome partition protein MukF, found in Haemophilus influenzae (strain PittGG).